Consider the following 357-residue polypeptide: Palmitoyltransferase ZDHHC20-A (357 aa).

The Cytoplasmic segment spans residues 1–14 (MAPSHAVRCCQRGL). The helical transmembrane segment at 15–35 (SWIPVIFINLVVCWSYYAYVV) threads the bilayer. The Lumenal segment spans residues 36-50 (ELCIYTIPNVNEQVI). The chain crosses the membrane as a helical span at residues 51-71 (YLVVFHAFFFMFMWSYWKTIS). Residues 72 to 166 (SKPTNPSKEF…NNCVGFSNYK (95 aa)) are Cytoplasmic-facing. In terms of domain architecture, DHHC spans 123–173 (RYCDRCQLIKPDRCHHCSTCDKCVLKMDHHCPWVNNCVGFSNYKFFVLFLA). Cys153 (S-palmitoyl cysteine intermediate) is an active-site residue. Residues 167–187 (FFVLFLAYSMLYCVYIAATVL) form a helical membrane-spanning segment. Residues 188 to 204 (QYFIKFWTNQLPDTHAK) are Lumenal-facing. A helical transmembrane segment spans residues 205-228 (FHVLFLFFVAAMFFISILSLFSYH). The Cytoplasmic segment spans residues 229–357 (LWLVGKNRTT…PVCVTLENES (129 aa)).

The protein belongs to the DHHC palmitoyltransferase family.

The protein localises to the golgi apparatus membrane. It localises to the cell membrane. Its subcellular location is the cytoplasm. The protein resides in the perinuclear region. It is found in the endoplasmic reticulum membrane. The protein localises to the endoplasmic reticulum-Golgi intermediate compartment membrane. It carries out the reaction L-cysteinyl-[protein] + hexadecanoyl-CoA = S-hexadecanoyl-L-cysteinyl-[protein] + CoA. The catalysed reaction is L-cysteinyl-[protein] + tetradecanoyl-CoA = S-tetradecanoyl-L-cysteinyl-[protein] + CoA. The enzyme catalyses L-cysteinyl-[protein] + octadecanoyl-CoA = S-octadecanoyl-L-cysteinyl-[protein] + CoA. Functionally, palmitoyltransferase that could catalyze the addition of palmitate onto various protein substrates. Catalyzes palmitoylation of Cys residues on protein substrates and has a preference for acyl-CoA with C16 fatty acid chains but may also utilize acyl-CoA with C14 and C18 fatty acid chains. The polypeptide is Palmitoyltransferase ZDHHC20-A (Danio rerio (Zebrafish)).